Reading from the N-terminus, the 1087-residue chain is DNA polymerase II large subunit (1087 aa).

The protein belongs to the archaeal DNA polymerase II family. In terms of assembly, heterodimer of a large subunit and a small subunit.

It carries out the reaction DNA(n) + a 2'-deoxyribonucleoside 5'-triphosphate = DNA(n+1) + diphosphate. The catalysed reaction is Exonucleolytic cleavage in the 3'- to 5'-direction to yield nucleoside 5'-phosphates.. Possesses two activities: a DNA synthesis (polymerase) and an exonucleolytic activity that degrades single-stranded DNA in the 3'- to 5'-direction. Has a template-primer preference which is characteristic of a replicative DNA polymerase. This chain is DNA polymerase II large subunit (polC), found in Thermoplasma acidophilum (strain ATCC 25905 / DSM 1728 / JCM 9062 / NBRC 15155 / AMRC-C165).